A 478-amino-acid chain; its full sequence is Kynureninase (478 aa).

Pyridoxal 5'-phosphate is bound by residues L150, T151, 178–181 (FPSD), S234, D263, H266, and Y288. N6-(pyridoxal phosphate)lysine is present on K289. Residues W318 and N346 each coordinate pyridoxal 5'-phosphate.

The protein belongs to the kynureninase family. As to quaternary structure, homodimer. It depends on pyridoxal 5'-phosphate as a cofactor.

The protein resides in the cytoplasm. The catalysed reaction is L-kynurenine + H2O = anthranilate + L-alanine + H(+). It carries out the reaction 3-hydroxy-L-kynurenine + H2O = 3-hydroxyanthranilate + L-alanine + H(+). It participates in amino-acid degradation; L-kynurenine degradation; L-alanine and anthranilate from L-kynurenine: step 1/1. The protein operates within cofactor biosynthesis; NAD(+) biosynthesis; quinolinate from L-kynurenine: step 2/3. Its function is as follows. Catalyzes the cleavage of L-kynurenine (L-Kyn) and L-3-hydroxykynurenine (L-3OHKyn) into anthranilic acid (AA) and 3-hydroxyanthranilic acid (3-OHAA), respectively. The chain is Kynureninase from Caenorhabditis elegans.